We begin with the raw amino-acid sequence, 161 residues long: DNA-directed RNA polymerase 18 kDa subunit (161 aa).

Belongs to the poxviridae DNA-directed RNA polymerase 18 kDa subunit family. The DNA-dependent RNA polymerase used for intermediate and late genes expression consists of eight subunits Rpo30/OPG66, Rpo7/OPG90, Rpo22/OPG103, Rpo147/OPG105, Rpo18/OPG119, Rpo19/OPG131, Rpo132/OPG151 and Rpo35/OPG156. The same holoenzyme, with the addition of the transcription-specificity factor OPG109, is used for early gene expression.

Its subcellular location is the virion. The catalysed reaction is RNA(n) + a ribonucleoside 5'-triphosphate = RNA(n+1) + diphosphate. In terms of biological role, part of the DNA-dependent RNA polymerase which catalyzes the transcription of viral DNA into RNA using the four ribonucleoside triphosphates as substrates. Responsible for the transcription of early, intermediate and late genes. DNA-dependent RNA polymerase associates with the early transcription factor (ETF), itself composed of OPG118 and OPG133, thereby allowing the early genes transcription. Late transcription, and probably also intermediate transcription, require newly synthesized RNA polymerase. In Homo sapiens (Human), this protein is DNA-directed RNA polymerase 18 kDa subunit (OPG119).